The primary structure comprises 182 residues: Adenine phosphoribosyltransferase (182 aa).

This sequence belongs to the purine/pyrimidine phosphoribosyltransferase family. In terms of assembly, homodimer.

It localises to the cytoplasm. It catalyses the reaction AMP + diphosphate = 5-phospho-alpha-D-ribose 1-diphosphate + adenine. It functions in the pathway purine metabolism; AMP biosynthesis via salvage pathway; AMP from adenine: step 1/1. Catalyzes a salvage reaction resulting in the formation of AMP, that is energically less costly than de novo synthesis. The polypeptide is Adenine phosphoribosyltransferase (Streptomyces avermitilis (strain ATCC 31267 / DSM 46492 / JCM 5070 / NBRC 14893 / NCIMB 12804 / NRRL 8165 / MA-4680)).